A 471-amino-acid chain; its full sequence is Alpha-galactosidase (471 aa).

Positions 1 to 18 (MSYIYLFITAAAVTGALG) are cleaved as a signal peptide. C42 and C74 are joined by a disulfide. Substrate contacts are provided by D72 and D73. The N-linked (GlcNAc...) asparagine glycan is linked to N82. A disulfide bond links C121 and C151. Residue K147 coordinates substrate. D149 acts as the Nucleophile in catalysis. An N-linked (GlcNAc...) asparagine glycan is attached at N175. A substrate-binding site is contributed by R205. D209 serves as the catalytic Proton donor. Disulfide bonds link C221–C237 and C223–C230. Position 251 (Q251) interacts with substrate. N-linked (GlcNAc...) asparagine glycans are attached at residues N270, N361, N370, N417, N422, N435, and N454.

Belongs to the glycosyl hydrolase 27 family. As to quaternary structure, homotetramer.

Its subcellular location is the secreted. The catalysed reaction is Hydrolysis of terminal, non-reducing alpha-D-galactose residues in alpha-D-galactosides, including galactose oligosaccharides, galactomannans and galactolipids.. The polypeptide is Alpha-galactosidase (MEL) (Saccharomyces mikatae (Yeast)).